A 477-amino-acid chain; its full sequence is Aspartyl/glutamyl-tRNA(Asn/Gln) amidotransferase subunit B (477 aa).

Belongs to the GatB/GatE family. GatB subfamily. In terms of assembly, heterotrimer of A, B and C subunits.

It carries out the reaction L-glutamyl-tRNA(Gln) + L-glutamine + ATP + H2O = L-glutaminyl-tRNA(Gln) + L-glutamate + ADP + phosphate + H(+). It catalyses the reaction L-aspartyl-tRNA(Asn) + L-glutamine + ATP + H2O = L-asparaginyl-tRNA(Asn) + L-glutamate + ADP + phosphate + 2 H(+). In terms of biological role, allows the formation of correctly charged Asn-tRNA(Asn) or Gln-tRNA(Gln) through the transamidation of misacylated Asp-tRNA(Asn) or Glu-tRNA(Gln) in organisms which lack either or both of asparaginyl-tRNA or glutaminyl-tRNA synthetases. The reaction takes place in the presence of glutamine and ATP through an activated phospho-Asp-tRNA(Asn) or phospho-Glu-tRNA(Gln). This is Aspartyl/glutamyl-tRNA(Asn/Gln) amidotransferase subunit B from Sulfurovum sp. (strain NBC37-1).